The chain runs to 168 residues: Phosphopantetheine adenylyltransferase (168 aa).

Ser9 contacts substrate. ATP contacts are provided by residues Ser9–Phe10 and His17. Substrate contacts are provided by Lys41, Leu73, and Arg87. ATP is bound by residues Gly88–Arg90, Glu98, and Tyr123–Ser129.

This sequence belongs to the bacterial CoaD family. Homohexamer. Mg(2+) serves as cofactor.

The protein localises to the cytoplasm. The catalysed reaction is (R)-4'-phosphopantetheine + ATP + H(+) = 3'-dephospho-CoA + diphosphate. It functions in the pathway cofactor biosynthesis; coenzyme A biosynthesis; CoA from (R)-pantothenate: step 4/5. Reversibly transfers an adenylyl group from ATP to 4'-phosphopantetheine, yielding dephospho-CoA (dPCoA) and pyrophosphate. The polypeptide is Phosphopantetheine adenylyltransferase (Heliobacterium modesticaldum (strain ATCC 51547 / Ice1)).